A 476-amino-acid chain; its full sequence is NAD(+) hydrolase ThsA (476 aa).

The region spanning 4–283 is the Deacetylase sirtuin-type domain; sequence NPIVELFIKD…QRIENNIKTK (280 aa). NAD(+)-binding residues include Ala-23, Asp-114, and His-152. The active-site Proton acceptor is the His-152. Positions 284–476 are SLOG (STALD) domain, binds 3'cADPR; sequence TVFLSGSAVE…IIEFVEILSN (193 aa). 3'cADPR is bound by residues Gly-289, Ser-290, Leu-326, Phe-357, Arg-371, Lys-388, Gly-399, and Glu-403.

Belongs to the soluble Thoeris ThsA family. In terms of assembly, homotetramer formed by dimer of dimers; homooctamers are occasionally seen. Not seen to interact with ThsB. In the absence of the signal generated by ThsB, 63% monomer and 20% homotetramer; in the presence of the ThsB signal product 40% of the protein is dimeric. Homotetramer in solution; probably dimerizes via the N-terminal sirtuin-like domain.

It is found in the cytoplasm. The catalysed reaction is NAD(+) + H2O = ADP-D-ribose + nicotinamide + H(+). With respect to regulation, activated by a molecule generated by endogenous ThsB (AC J8G8J6) or ThsB' (AC J8CSK2); activation in vitro is 50-100x more sensitive to 3' cyclic ADP-D-ribose (3'cADPR) than 2'cADPR. 3'cADPR activates the NADase function of ThsA by binding to the SLOG domain, which changes its tetramer organization, allowing NAD to access the active site. Also activated by a signal molecule generated by B.dafuensis TIR1 (AC A0A5B8Z670) and TIR2 (AC A0A5B8Z260), and by BdTIR (AC I1GTC2), a plant protein involved in defense against bacterial infection. The signal produced by BdTIR is probably 2'cADPR, which activates this protein, the signal produced by endogenous ThsB' is probably 3'cADPR. Functionally, NAD(+) hydrolyzing component (NADase) of the Thoeris antiviral defense system, composed of ThsA and ThsB. Activated by a signal molecule generated by endogenous ThsB (AC J8G8J6) or ThsB' (AC J8CSK2, probably 3'cADPR), by TIR1 and TIR2 from B.dafuensis or by BdTIR from B.distachyon (AC I1GTC2, probably 2'cADPR). Upon activation binds and hydrolyzes NAD(+), leading to cell death and inhibition of phage replication. Not seen to bind DNA. Activation is 50-100x more sensitive to 3' cyclic ADP-D-ribose (3'cADPR) than 2'cADPR. In another paper ThsA is not activated by any tested cADPR isomer, although it binds 3'cADPR; it was suggested the protein is already in a fully active state. Expression of ThsA and ThsB in B.subtilis (strain BEST7003) confers resistance to phages phi29, SBSphiC, SBSphiJ and SPO1. At multiplicity of infection (MOI) of 0.05 Thoeris-encoding cultures grow normally when infected with SPO1, at MOI 5 cultures collapse prematurely by 90 minutes post-infection, thus the phage are not able to complete a replication cycle. NAD(+) levels fall and ADP-D-ribose levels rise 60 minutes post-infection. Thoeris cultures eventually recover, but retain the same susceptibility to SPO1. The protein is NAD(+) hydrolase ThsA of Bacillus cereus (strain MSX-D12).